A 485-amino-acid polypeptide reads, in one-letter code: Ribulose bisphosphate carboxylase large chain 2 (485 aa).

Residues N124 and T174 each coordinate substrate. K176 functions as the Proton acceptor in the catalytic mechanism. K178 contributes to the substrate binding site. K202, D204, and E205 together coordinate Mg(2+). The residue at position 202 (K202) is an N6-carboxylysine. Catalysis depends on H294, which acts as the Proton acceptor. Substrate is bound by residues R295, H327, and S379.

It belongs to the RuBisCO large chain family. Type I subfamily. In terms of assembly, heterohexadecamer of 8 large chains and 8 small chains. Requires Mg(2+) as cofactor.

The catalysed reaction is 2 (2R)-3-phosphoglycerate + 2 H(+) = D-ribulose 1,5-bisphosphate + CO2 + H2O. It catalyses the reaction D-ribulose 1,5-bisphosphate + O2 = 2-phosphoglycolate + (2R)-3-phosphoglycerate + 2 H(+). Functionally, ruBisCO catalyzes two reactions: the carboxylation of D-ribulose 1,5-bisphosphate, the primary event in carbon dioxide fixation, as well as the oxidative fragmentation of the pentose substrate. Both reactions occur simultaneously and in competition at the same active site. This chain is Ribulose bisphosphate carboxylase large chain 2, found in Rhodopseudomonas palustris (strain BisB5).